The following is a 434-amino-acid chain: V-type ATP synthase beta chain (434 aa).

It belongs to the ATPase alpha/beta chains family.

Functionally, produces ATP from ADP in the presence of a proton gradient across the membrane. The V-type beta chain is a regulatory subunit. The sequence is that of V-type ATP synthase beta chain from Borreliella afzelii (strain PKo) (Borrelia afzelii).